A 450-amino-acid chain; its full sequence is Molybdate-anion transporter (450 aa).

Transmembrane regions (helical) follow at residues 1-21 (MLVT…GLEL), 43-63 (LDFY…APYL), 79-99 (ILYV…SSLV), 128-148 (FVLL…FSAF), 174-194 (AAFW…AVAS), 195-215 (WIGL…ALAG), 249-269 (VLLL…FVFL), 278-298 (GAPL…GSSL), 311-331 (PMHL…MLTF), 344-364 (FIAF…MSFL), 376-396 (GVLN…LLVL), and 409-429 (FSIC…LFTV).

Belongs to the major facilitator superfamily.

The protein resides in the cell membrane. Functionally, mediates high-affinity intracellular uptake of the rare oligo-element molybdenum. The chain is Molybdate-anion transporter (MFSD5) from Pongo abelii (Sumatran orangutan).